The primary structure comprises 348 residues: A-type ATP synthase subunit C (348 aa).

This sequence belongs to the V-ATPase V0D/AC39 subunit family. As to quaternary structure, has multiple subunits with at least A(3), B(3), C, D, E, F, H, I and proteolipid K(x).

The protein localises to the cell membrane. Its function is as follows. Component of the A-type ATP synthase that produces ATP from ADP in the presence of a proton gradient across the membrane. The chain is A-type ATP synthase subunit C from Halorubrum lacusprofundi (strain ATCC 49239 / DSM 5036 / JCM 8891 / ACAM 34).